A 366-amino-acid polypeptide reads, in one-letter code: MSNPPSKLYIGLMSGTSLDGVDAALVSIQNGELELKAFQTFPYTDNLKKQLHHLNQTPHVDLKALCDMEYQVANAFSEATQQLLDNCDHVASDIRAIGSHGQTIFHAPDIPMSLQIGHPAFIAKNTGITTVADFRIDDMANNGQGAPLAPAFHQKLFGNTVGTAVVNIGGISNITFLDQQKTLGFDTGPGNGLMDEYCEQFFNCSYDADGKMAQTGQVNMALLSDLMQEPYFRLPAPKTTGKDLFNSDWLNPFLAKYSNVSKKDILSTLNQLTVDTIIQGLNTLPSQPKRLLICGGGAENKTLISRLQAQLSYPVKTTQSVGVPPHAIEAMMCAWLAEQRLNNTPIALQHITGATKDSVLGAVWHP.

15–22 (GTSLDGVD) serves as a coordination point for ATP.

This sequence belongs to the anhydro-N-acetylmuramic acid kinase family.

The catalysed reaction is 1,6-anhydro-N-acetyl-beta-muramate + ATP + H2O = N-acetyl-D-muramate 6-phosphate + ADP + H(+). It functions in the pathway amino-sugar metabolism; 1,6-anhydro-N-acetylmuramate degradation. Its pathway is cell wall biogenesis; peptidoglycan recycling. Functionally, catalyzes the specific phosphorylation of 1,6-anhydro-N-acetylmuramic acid (anhMurNAc) with the simultaneous cleavage of the 1,6-anhydro ring, generating MurNAc-6-P. Is required for the utilization of anhMurNAc either imported from the medium or derived from its own cell wall murein, and thus plays a role in cell wall recycling. This is Anhydro-N-acetylmuramic acid kinase from Hydrogenovibrio crunogenus (strain DSM 25203 / XCL-2) (Thiomicrospira crunogena).